Here is a 225-residue protein sequence, read N- to C-terminus: UPF0173 metal-dependent hydrolase PYRAB05000 (225 aa).

It belongs to the UPF0173 family.

The polypeptide is UPF0173 metal-dependent hydrolase PYRAB05000 (Pyrococcus abyssi (strain GE5 / Orsay)).